The primary structure comprises 164 residues: R-phycoerythrin alpha chain (164 aa).

Residues Asn-47, Lys-81, Cys-82, Arg-84, His-88, Arg-137, Cys-139, and Arg-142 each coordinate (2R,3E)-phycoerythrobilin.

The protein belongs to the phycobiliprotein family. Heterododecamer of 6 alpha and 6 beta chains. The basic functional unit of phycobiliproteins is a ring-shaped hexamer formed from two back-to-back trimers contacting via the alpha chain subunits. The trimers are composed of alpha/beta subunit heterodimers arranged around a three-fold axis of symmetry. The phycoerythrins also contain a gamma subunit which is located in the center of the hexamer. Post-translationally, contains two covalently linked phycoerythrobilin chromophores.

The protein resides in the plastid. It is found in the chloroplast thylakoid membrane. Its function is as follows. Light-harvesting photosynthetic tetrapyrrole chromophore-protein from the phycobiliprotein complex. The protein is R-phycoerythrin alpha chain (rpeA) of Agarophyton chilense (Red seaweed).